Here is a 445-residue protein sequence, read N- to C-terminus: Glutamate--tRNA ligase 2 (445 aa).

Residues 10 to 20 (PSPTGRLHVGN) carry the 'HIGH' region motif. The 'KMSKS' region motif lies at 241 to 245 (ALSKR). K244 is an ATP binding site.

The protein belongs to the class-I aminoacyl-tRNA synthetase family. Glutamate--tRNA ligase type 1 subfamily. Monomer.

The protein localises to the cytoplasm. It catalyses the reaction tRNA(Glu) + L-glutamate + ATP = L-glutamyl-tRNA(Glu) + AMP + diphosphate. Its function is as follows. Catalyzes the attachment of glutamate to tRNA(Glu) in a two-step reaction: glutamate is first activated by ATP to form Glu-AMP and then transferred to the acceptor end of tRNA(Glu). In Hyphomonas neptunium (strain ATCC 15444), this protein is Glutamate--tRNA ligase 2.